Here is a 295-residue protein sequence, read N- to C-terminus: Probable ketoamine kinase slr1563 (295 aa).

99 to 101 (EWL) serves as a coordination point for ATP. Asp-201 functions as the Proton acceptor in the catalytic mechanism.

The protein belongs to the fructosamine kinase family.

Its function is as follows. Ketoamine kinase that phosphorylates ketoamines on the third carbon of the sugar moiety to generate ketoamine 3-phosphate. This chain is Probable ketoamine kinase slr1563, found in Synechocystis sp. (strain ATCC 27184 / PCC 6803 / Kazusa).